The following is a 214-amino-acid chain: Cytochrome b (214 aa).

The next 4 helical transmembrane spans lie at 31–51, 75–96, 111–131, and 176–196; these read FGSM…FLAI, WIMQ…YIHI, WLSG…GYVL, and FFAL…IHIL. Residues His81 and His95 each coordinate heme b. His180 and His194 together coordinate heme b. His199 serves as a coordination point for a ubiquinone.

The protein belongs to the cytochrome b family. The cytochrome bc1 complex contains 3 respiratory subunits (MT-CYB, CYC1 and UQCRFS1), 2 core proteins (UQCRC1 and UQCRC2) and probably 6 low-molecular weight proteins. Heme b serves as cofactor.

The protein resides in the mitochondrion inner membrane. In terms of biological role, component of the ubiquinol-cytochrome c reductase complex (complex III or cytochrome b-c1 complex) that is part of the mitochondrial respiratory chain. The b-c1 complex mediates electron transfer from ubiquinol to cytochrome c. Contributes to the generation of a proton gradient across the mitochondrial membrane that is then used for ATP synthesis. The chain is Cytochrome b (MT-CYB) from Agkistrodon contortrix contortrix (Southern copperhead).